A 127-amino-acid chain; its full sequence is Fluoride-specific ion channel FluC (127 aa).

The next 4 membrane-spanning stretches (helical) occupy residues 4-24 (LLLA…LLSM), 35-55 (LGTL…FAWF), 71-91 (TGFC…VFLL), and 103-123 (VFVN…LFSA). The Na(+) site is built by Gly-75 and Thr-78.

This sequence belongs to the fluoride channel Fluc/FEX (TC 1.A.43) family.

Its subcellular location is the cell inner membrane. The catalysed reaction is fluoride(in) = fluoride(out). Na(+) is not transported, but it plays an essential structural role and its presence is essential for fluoride channel function. Its function is as follows. Fluoride-specific ion channel. Important for reducing fluoride concentration in the cell, thus reducing its toxicity. This is Fluoride-specific ion channel FluC from Escherichia coli O17:K52:H18 (strain UMN026 / ExPEC).